A 308-amino-acid chain; its full sequence is MKVIFAGTPDFAAAALKAVAAAGFEIPLVLTQPDRPKGRGMQLTAPPVKQAALELGLRVAQPEKLRNNAEALQMLKEVEADVMVVAAYGLILPQEVLDTPKHGCLNIHASLLPRWRGAAPIQRAIEAGDAETGVCIMQMDIGLDTGDVVSEHRYAIQPTDTANEVHDALMEIGAAAVVADLQQLQSKGRLNAVKQPEEGVTYAQKLSKEEARIDWSESADIIERKIRAFNPVPAAWVEYQGKPMKIRRAEVVAQQGTAGEVLSCSADGLVVACGESALKITELQPAGGRRMNIAAFAAGRSIEAGAKL.

110 to 113 (SLLP) is a binding site for (6S)-5,6,7,8-tetrahydrofolate.

The protein belongs to the Fmt family.

It catalyses the reaction L-methionyl-tRNA(fMet) + (6R)-10-formyltetrahydrofolate = N-formyl-L-methionyl-tRNA(fMet) + (6S)-5,6,7,8-tetrahydrofolate + H(+). Attaches a formyl group to the free amino group of methionyl-tRNA(fMet). The formyl group appears to play a dual role in the initiator identity of N-formylmethionyl-tRNA by promoting its recognition by IF2 and preventing the misappropriation of this tRNA by the elongation apparatus. This Neisseria gonorrhoeae (strain ATCC 700825 / FA 1090) protein is Methionyl-tRNA formyltransferase.